The chain runs to 270 residues: NADPH-dependent 7-cyano-7-deazaguanine reductase (270 aa).

Position 79-81 (79-81 (IES)) interacts with substrate. Residue 81 to 82 (SK) participates in NADPH binding. Catalysis depends on Cys-177, which acts as the Thioimide intermediate. Asp-184 acts as the Proton donor in catalysis. 216-217 (HE) lines the substrate pocket. Residue 245–246 (RG) participates in NADPH binding.

Belongs to the GTP cyclohydrolase I family. QueF type 2 subfamily. Homodimer.

Its subcellular location is the cytoplasm. It carries out the reaction 7-aminomethyl-7-carbaguanine + 2 NADP(+) = 7-cyano-7-deazaguanine + 2 NADPH + 3 H(+). It participates in tRNA modification; tRNA-queuosine biosynthesis. Its function is as follows. Catalyzes the NADPH-dependent reduction of 7-cyano-7-deazaguanine (preQ0) to 7-aminomethyl-7-deazaguanine (preQ1). This chain is NADPH-dependent 7-cyano-7-deazaguanine reductase, found in Acinetobacter baumannii (strain ATCC 17978 / DSM 105126 / CIP 53.77 / LMG 1025 / NCDC KC755 / 5377).